The chain runs to 343 residues: Signal peptide peptidase 2 (343 aa).

Residues Met1 to Pro19 are Lumenal-facing. The chain crosses the membrane as a helical span at residues Leu20–Val40. Residues Gly41–Arg62 lie on the Cytoplasmic side of the membrane. Residues Phe63–Lys83 traverse the membrane as a helical segment. Over Asp84 to Val89 the chain is Lumenal. Residues Leu90–Ile110 form a helical membrane-spanning segment. Residues Lys111–Gln141 lie on the Cytoplasmic side of the membrane. A helical membrane pass occupies residues Val142–Leu162. Residues Ala163–Asn165 are Lumenal-facing. The helical transmembrane segment at Val166–Thr186 threads the bilayer. At Gly187–Ala188 the chain is on the cytoplasmic side. Residues Ile189–Val209 traverse the membrane as a helical segment. Asp198 is a catalytic residue. Topologically, residues Ser210–Arg230 are lumenal. Residues Pro231–Leu251 form a helical membrane-spanning segment. Residue Asp239 is part of the active site. The Cytoplasmic portion of the chain corresponds to Arg252 to Ser266. The chain crosses the membrane as a helical span at residues Ala267–Ala287. The Lumenal segment spans residues Ala288 to Pro290. A PAL motif is present at residues Pro290–Leu292. Residues Ala291–Gly311 traverse the membrane as a helical segment. Topologically, residues Glu312–Glu343 are cytoplasmic. Residues Ala324–Thr334 show a composition bias toward acidic residues. A disordered region spans residues Ala324–Glu343. The short motif at Lys340–Glu343 is the Endoplasmic reticulum targeting signal element.

It belongs to the peptidase A22B family. Ubiquitous.

It localises to the endoplasmic reticulum membrane. In terms of biological role, intramembrane-cleaving aspartic protease (I-CLiP) that cleaves type II membrane signal peptides in the hydrophobic plane of the membrane. Catalyzes intramembrane proteolysis of some signal peptides after they have been cleaved from a preprotein, resulting in the release of the fragment from the ER membrane into the cytoplasm. The protein is Signal peptide peptidase 2 (SPP2) of Oryza sativa subsp. japonica (Rice).